The following is a 288-amino-acid chain: SUR7 family protein pun1 (288 aa).

Residues 1–11 lie on the Cytoplasmic side of the membrane; it reads MGMGFNPIKAL. A helical transmembrane segment spans residues 12–32; that stretch reads FTGIGTVCVGVGALLSILCII. N-linked (GlcNAc...) asparagine glycans are attached at residues asparagine 33, asparagine 50, asparagine 59, asparagine 66, asparagine 122, asparagine 153, and asparagine 160. At 33 to 185 the chain is on the extracellular side; sequence NQTQHNIAFQ…GACYAMRAMY (153 aa). Residues 186–206 form a helical membrane-spanning segment; sequence ILGFIFFALTIVSIVISCLPF. Residues 207–210 lie on the Cytoplasmic side of the membrane; that stretch reads FGPL. The chain crosses the membrane as a helical span at residues 211 to 231; that stretch reads FLNVFSFFATIFTFIAAVIAV. Over 232–257 the chain is Extracellular; the sequence is ATYRIAISELEKNIEILNIPIVLGKK. Residues 258–278 traverse the membrane as a helical segment; that stretch reads IYAYSFLSAAAGLAACILYFI. Topologically, residues 279–288 are cytoplasmic; sequence GNLTSGYSPL.

This sequence belongs to the SUR7 family.

The protein localises to the golgi apparatus membrane. The protein resides in the cell membrane. It localises to the cell tip. Functionally, contributes to the wild-type cellular response to nitrogen stress through signaling pathways that regulate the expression of genes involved in amino acid biosynthesis. Required for wild-type filamentous growth, cell growth, and cell-cell adhesion. In Schizosaccharomyces pombe (strain 972 / ATCC 24843) (Fission yeast), this protein is SUR7 family protein pun1 (pun1).